The sequence spans 427 residues: Dihydroorotase (427 aa).

Residues His60 and His62 each coordinate Zn(2+). Residues 62-64 (HLR) and Asn94 contribute to the substrate site. Zn(2+)-binding residues include Asp152, His179, and His232. Asn278 lines the substrate pocket. Asp305 contributes to the Zn(2+) binding site. Residue Asp305 is part of the active site. Residues His309 and 323–324 (FG) contribute to the substrate site.

The protein belongs to the metallo-dependent hydrolases superfamily. DHOase family. Class I DHOase subfamily. Zn(2+) serves as cofactor.

The catalysed reaction is (S)-dihydroorotate + H2O = N-carbamoyl-L-aspartate + H(+). Its pathway is pyrimidine metabolism; UMP biosynthesis via de novo pathway; (S)-dihydroorotate from bicarbonate: step 3/3. Functionally, catalyzes the reversible cyclization of carbamoyl aspartate to dihydroorotate. The chain is Dihydroorotase from Geobacillus sp. (strain WCH70).